The primary structure comprises 109 residues: Beta-keratin-related protein (109 aa).

Position 2 is an N-acetylserine (serine 2).

The protein belongs to the avian keratin family.

This is Beta-keratin-related protein (BKJ) from Coturnix japonica (Japanese quail).